Consider the following 344-residue polypeptide: Follistatin (344 aa).

The first 29 residues, 1–29 (MVCARHQPGGLCLLLLLLCQFMEDRSAQA), serve as a signal peptide directing secretion. The TB domain occupies 30–103 (GNCWLRQAKN…TCENVDCGPG (74 aa)). 18 disulfide bridges follow: Cys32-Cys55, Cys42-Cys88, Cys56-Cys91, Cys95-Cys106, Cys100-Cys116, Cys118-Cys150, Cys122-Cys143, Cys132-Cys164, Cys168-Cys179, Cys173-Cys189, Cys192-Cys225, Cys196-Cys218, Cys207-Cys239, Cys245-Cys256, Cys250-Cys267, Cys270-Cys302, Cys274-Cys295, and Cys284-Cys316. Positions 94 to 117 (TCENVDCGPGKKCRMNKKNKPRCV) constitute a Follistatin-like 1 domain. Residues 112-166 (NKPRCVCAPDCSNITWKGPVCGLDGKTYRNECALLKARCKEQPELEVQYQGKCKK) enclose the Kazal-like 1 domain. N-linked (GlcNAc...) asparagine glycosylation occurs at Asn124. One can recognise a Follistatin-like 2 domain in the interval 167-190 (TCRDVFCPGSSTCVVDQTNNAYCV). Positions 186–241 (NAYCVTCNRICPEPSSSEQYLCGNDGVTYSSACHLRKATCLLGRSIGLAYEGKCIK) constitute a Kazal-like 2 domain. The Follistatin-like 3 domain occupies 244 to 268 (SCEDIQCGGGKKCLWDSKVGRGRCS). The Kazal-like 3 domain maps to 264-318 (RGRCSLCDELCPDSKSDEPVCASDNATYASECAMKEAACSSGVLLEVKHSGSCNS). Asn288 carries an N-linked (GlcNAc...) asparagine glycan. Residues 315-344 (SCNSISEETEEEEEEEDQDYSFPISSILEW) are disordered. Over residues 321–333 (EETEEEEEEEDQD) the composition is skewed to acidic residues.

Interacts with GDF11. Interacts with activin A/INHBA. Interacts with myostatin/MSTN.

It localises to the secreted. Its subcellular location is the nucleus. The protein localises to the nucleolus. Multifunctional regulatory protein whose primary function is to antagonize members of the transforming growth factor beta (TGF-beta) superfamily including activin, myostatin, GDF11 or bone morphogenetic proteins (BMPs). Mechanistically, binds to these ligands in the extracellular space, blocking their type II receptor-binding site to inhibit downstream signaling. Plays an essential role in muscle fiber formation and growth both by preventing the repressive effects of myostatin and through SMAD3/AKT/mTOR signaling independently of myostatin. Also promotes neural differentiation by antagonizing the action BMP4. Acts as a specific inhibitor of the biosynthesis and secretion of pituitary follicle stimulating hormone (FSH) by sequestering activin A/INHBA. On the other hand, translocates into the nucleus where it down-regulates rRNA synthesis and ribosome biogenesis to maintain cellular energy homeostasis by binding to rDNA. The chain is Follistatin from Mus musculus (Mouse).